Here is a 226-residue protein sequence, read N- to C-terminus: Urease accessory protein UreF (226 aa).

It belongs to the UreF family. UreD, UreF and UreG form a complex that acts as a GTP-hydrolysis-dependent molecular chaperone, activating the urease apoprotein by helping to assemble the nickel containing metallocenter of UreC. The UreE protein probably delivers the nickel.

It localises to the cytoplasm. Its function is as follows. Required for maturation of urease via the functional incorporation of the urease nickel metallocenter. The chain is Urease accessory protein UreF from Burkholderia cenocepacia (strain HI2424).